Reading from the N-terminus, the 408-residue chain is Sprouty-related, EVH1 domain-containing protein 3 (408 aa).

The WH1 domain occupies 1-113; sequence MVRVRAVVMA…KSLLAALAAL (113 aa). The interval 118–226 is disordered; that stretch reads LTPSSSSSSS…YEDYRRSGPP (109 aa). Positions 120 to 130 are enriched in low complexity; sequence PSSSSSSSSPS. Residues 192-242 form the KBD domain; it reads LPFTGIPEPSESLAGAGSQGWGSRGYEDYRRSGPPPPPLALSTCVVRFAKT. Arginine 238 carries the post-translational modification Asymmetric dimethylarginine. Position 246 is an omega-N-methylarginine (arginine 246). A disordered region spans residues 256 to 286; that stretch reads LPAPLTEAAPPAPPARPPPGPGPTPAPAKAS. Residues 265 to 281 are compositionally biased toward pro residues; the sequence is PPAPPARPPPGPGPTPA. An SPR domain is found at 294 to 405; that stretch reads RCVHCRALFR…CAGCGGRHEE (112 aa).

As to quaternary structure, interacts with palmitoyltransferase ZDHHC17/HIP14; the interaction leads to palmitoylation of SPRED3. Phosphorylated on tyrosine. In terms of processing, palmitoylated by ZDHHC17/HIP14. Post-translationally, ubiquitinated. In terms of tissue distribution, brain specific.

It localises to the cell membrane. Tyrosine kinase substrate that inhibits growth-factor-mediated activation of MAP kinase. Inhibits fibroblast growth factor (FGF)-induced retinal lens fiber differentiation, probably by inhibiting FGF-mediated phosphorylation of ERK1/2. Inhibits TGFB-induced epithelial-to-mesenchymal transition in lens epithelial cells. The polypeptide is Sprouty-related, EVH1 domain-containing protein 3 (Spred3) (Mus musculus (Mouse)).